Here is a 203-residue protein sequence, read N- to C-terminus: Endo-type membrane-bound lytic murein transglycosylase A (203 aa).

An N-terminal signal peptide occupies residues 1–15; the sequence is MKLRWLMWLVVFLAG. C16 carries the N-palmitoyl cysteine lipid modification. C16 is lipidated: S-diacylglycerol cysteine.

The protein belongs to the transglycosylase Slt family.

It is found in the cell outer membrane. It carries out the reaction Endolytic cleavage of the (1-&gt;4)-beta-glycosidic linkage between N-acetylmuramic acid (MurNAc) and N-acetylglucosamine (GlcNAc) residues in peptidoglycan with concomitant formation of a 1,6-anhydrobond in the MurNAc residue.. Murein-degrading enzyme. May play a role in recycling of muropeptides during cell elongation and/or cell division. Preferentially cleaves at a distance of more than two disaccharide units from the ends of the glycan chain. This is Endo-type membrane-bound lytic murein transglycosylase A from Cronobacter sakazakii (strain ATCC BAA-894) (Enterobacter sakazakii).